The primary structure comprises 265 residues: Hydroxyethylthiazole kinase (265 aa).

M50 contributes to the substrate binding site. ATP is bound by residues R125 and T171. G198 contributes to the substrate binding site.

It belongs to the Thz kinase family. Mg(2+) serves as cofactor.

The enzyme catalyses 5-(2-hydroxyethyl)-4-methylthiazole + ATP = 4-methyl-5-(2-phosphooxyethyl)-thiazole + ADP + H(+). It participates in cofactor biosynthesis; thiamine diphosphate biosynthesis; 4-methyl-5-(2-phosphoethyl)-thiazole from 5-(2-hydroxyethyl)-4-methylthiazole: step 1/1. In terms of biological role, catalyzes the phosphorylation of the hydroxyl group of 4-methyl-5-beta-hydroxyethylthiazole (THZ). This is Hydroxyethylthiazole kinase from Salmonella paratyphi B (strain ATCC BAA-1250 / SPB7).